The chain runs to 650 residues: MEENNKANIYDSSSIKVLEGLEAVRKRPGMYIGSTGEEGLHHMIWEIVDNSIDEAMGGFASFVKLTLEDNFVTRVEDDGRGIPVDIHPKTNRSTVETVFTVLHAGGKFDNDSYKVSGGLHGVGASVVNALSSSFKVWVFRQNKKYFLSFSDGGKVIGDLVQEGNSEKEHGTIVEFVPDFSVMEKSDYKQTVIVSRLQQLAFLNKGIRIDFVDNRKQNPQSFSWKYDGGLVEYIHHLNNEKEPLFNEVIADEKTETVKAVNRDENYTVKVEVAFQYNKTYNQSIFSFCNNINTTEGGTHVEGFRNALVKIINRFAVENKFLKDSDEKINRDDVCEGLTAIISIKHPNPQYEGQTKKKLGNTEVRPLVNSVVSEIFERFMLENPQEANAIIRKTLLAQEARRRSQEARELTRRKSPFDSGSLPGKLADCTTRDPSISELYIVEGDSAGGTAKTGRDRYFQAILPLRGKILNVEKSNFEQIFNNAEISALVMAIGCGIKPDFELEKLRYSKIVIMTDADVDGAHIRTLLLTFFFRFMYPLVEQGNIFIAQPPLYKVSYSHKDLYMHTDVQLEQWKSQNPNVKFGLQRYKGLGEMDALQLWETTMDPKVRTLLKVTVEDASIADKAFSLLMGDEVPPRREFIEKNARSVKNIDI.

Positions 400 to 414 are enriched in basic and acidic residues; it reads RRSQEARELTRRKSP. Residues 400 to 422 form a disordered region; the sequence is RRSQEARELTRRKSPFDSGSLPG. Positions 435–549 constitute a Toprim domain; it reads SELYIVEGDS…QGNIFIAQPP (115 aa). Mg(2+)-binding residues include glutamate 441, aspartate 514, and aspartate 516.

Belongs to the type II topoisomerase GyrB family. In terms of assembly, heterotetramer, composed of two GyrA and two GyrB chains. In the heterotetramer, GyrA contains the active site tyrosine that forms a transient covalent intermediate with DNA, while GyrB binds cofactors and catalyzes ATP hydrolysis. Mg(2+) serves as cofactor. It depends on Mn(2+) as a cofactor. The cofactor is Ca(2+).

The protein localises to the cytoplasm. The catalysed reaction is ATP-dependent breakage, passage and rejoining of double-stranded DNA.. Functionally, a type II topoisomerase that negatively supercoils closed circular double-stranded (ds) DNA in an ATP-dependent manner to modulate DNA topology and maintain chromosomes in an underwound state. Negative supercoiling favors strand separation, and DNA replication, transcription, recombination and repair, all of which involve strand separation. Also able to catalyze the interconversion of other topological isomers of dsDNA rings, including catenanes and knotted rings. Type II topoisomerases break and join 2 DNA strands simultaneously in an ATP-dependent manner. This chain is DNA gyrase subunit B, found in Mycoplasma genitalium (strain ATCC 33530 / DSM 19775 / NCTC 10195 / G37) (Mycoplasmoides genitalium).